The following is a 219-amino-acid chain: MHIHLFRCQCMIETIHIKNFRGIRELKLENLGQINIIAGKNNASKSSILEALALFLSAKEGFSLFIKILREILLWRGWYGEKSIYDLFYKNSKELEVSVKFLNQDFANLTLKNSNQSFANKNIAVELKSDKNSWSGRFDSHLIHPDYISSILTSAEATQSNFEFITSLTLIKFGYIESIYSQAYETQVLQDAIRLLREAYPEVKSLSPLQKYNKWIIHV.

This is an uncharacterized protein from Methanocaldococcus jannaschii (strain ATCC 43067 / DSM 2661 / JAL-1 / JCM 10045 / NBRC 100440) (Methanococcus jannaschii).